The chain runs to 729 residues: 1,4-alpha-glucan branching enzyme GlgB (729 aa).

The active-site Nucleophile is the aspartate 408. Residue glutamate 461 is the Proton donor of the active site.

This sequence belongs to the glycosyl hydrolase 13 family. GlgB subfamily. As to quaternary structure, monomer.

The catalysed reaction is Transfers a segment of a (1-&gt;4)-alpha-D-glucan chain to a primary hydroxy group in a similar glucan chain.. It functions in the pathway glycan biosynthesis; glycogen biosynthesis. Its function is as follows. Catalyzes the formation of the alpha-1,6-glucosidic linkages in glycogen by scission of a 1,4-alpha-linked oligosaccharide from growing alpha-1,4-glucan chains and the subsequent attachment of the oligosaccharide to the alpha-1,6 position. The polypeptide is 1,4-alpha-glucan branching enzyme GlgB (Vibrio cholerae serotype O1 (strain ATCC 39315 / El Tor Inaba N16961)).